Reading from the N-terminus, the 523-residue chain is Coatomer subunit delta-2 (523 aa).

The tract at residues 218-243 (DSFASKPKGRPSAAATAPGKGLGMKL) is disordered. The MHD domain occupies 282–523 (SDPVTVTIEE…RLVTANYQVV (242 aa)).

This sequence belongs to the adaptor complexes medium subunit family. Delta-COP subfamily. Oligomeric complex that consists of at least the alpha, beta, beta', gamma, delta, epsilon and zeta subunits.

It localises to the cytoplasm. Its subcellular location is the golgi apparatus membrane. It is found in the cytoplasmic vesicle. The protein resides in the COPI-coated vesicle membrane. Functionally, the coatomer is a cytosolic protein complex that binds to dilysine motifs and reversibly associates with Golgi non-clathrin-coated vesicles, which further mediate biosynthetic protein transport from the ER, via the Golgi up to the trans Golgi network. Coatomer complex is required for budding from Golgi membranes, and is essential for the retrograde Golgi-to-ER transport of dilysine-tagged proteins. The protein is Coatomer subunit delta-2 of Oryza sativa subsp. japonica (Rice).